The following is a 614-amino-acid chain: High-affinity choline transporter 1 (614 aa).

A helical transmembrane segment spans residues 6 to 26; sequence GVVSIVLFYLLILVVGIWAGR. Over 27 to 44 the chain is Cytoplasmic; sequence KKQSGNDSEEEVMLAGRS. The helical transmembrane segment at 45-65 threads the bilayer; the sequence is IGLFVGIFTMTATWVGGGYIN. Residues 66–75 are Extracellular-facing; it reads GTAEAIYTSG. A helical transmembrane segment spans residues 76–96; the sequence is LVWCQAPFGYALSLVFGGIFF. Topologically, residues 97–119 are cytoplasmic; the sequence is ANPMRKQGYITMLDPLQDSFGER. Residues 120–140 traverse the membrane as a helical segment; it reads MGGLLFLPALCGEVFWAAGIL. Over 141-158 the chain is Extracellular; it reads AALGATLSVIIDMDHRTS. A helical transmembrane segment spans residues 159–179; it reads VILSSCIAIFYTLFGGLYSVA. The Cytoplasmic segment spans residues 180–185; sequence YTDVIQ. A helical transmembrane segment spans residues 186–206; the sequence is LFCIFIGLWMCIPFAWSNEHV. Residues 207-225 are Extracellular-facing; it reads GSLSDLEVDWIGHVEPKKH. Residues 226–246 traverse the membrane as a helical segment; that stretch reads WLYIDYGLLLVFGGIPWQVYF. Topologically, residues 247-262 are cytoplasmic; that stretch reads QRVLSSKTAGRAQLLS. A helical membrane pass occupies residues 263–283; the sequence is YVAAAGCILMAIPPVLIGAIA. The Extracellular segment spans residues 284–305; that stretch reads KATPWNETDYKGPYPLTVDETS. Asn289 carries an N-linked (GlcNAc...) asparagine glycan. A helical transmembrane segment spans residues 306 to 326; sequence MILPMVLQYLTPDFVSFFGLG. Over 327–364 the chain is Cytoplasmic; sequence AVSAAVMSSADSSVLSAASMFARNVYKLIFRQKASEME. The helical transmembrane segment at 365–385 threads the bilayer; sequence IIWVMRVAIIVVGILATIMAL. Over 386–394 the chain is Extracellular; the sequence is TIPSIYGLW. A helical membrane pass occupies residues 395 to 415; that stretch reads SMCSDLVYVILFPQLLMVVHF. At 416–424 the chain is on the cytoplasmic side; it reads KKHCNTYGS. The chain crosses the membrane as a helical span at residues 425–445; the sequence is LSAYIVALAIRLSGGEAILGL. The Extracellular portion of the chain corresponds to 446–467; that stretch reads APLIKYPGYDEETKEQMFPFRT. A helical transmembrane segment spans residues 468-488; that stretch reads MAMLLSLVTLISVSWWTKMMF. Topologically, residues 489–614 are cytoplasmic; the sequence is ESGKLPPSYD…PTAEQDNTAF (126 aa). The disordered stretch occupies residues 583-614; it reads ATGVKPSGGGGGHLQSQSGMAMPTAEQDNTAF.

Belongs to the sodium:solute symporter (SSF) (TC 2.A.21) family.

The protein localises to the membrane. Functionally, imports choline from the extracellular space to the neuron with high affinity. Rate-limiting step in acetylcholine synthesis. Sodium ion and chloride ion dependent. The protein is High-affinity choline transporter 1 of Drosophila melanogaster (Fruit fly).